Reading from the N-terminus, the 276-residue chain is Release factor glutamine methyltransferase (276 aa).

S-adenosyl-L-methionine is bound by residues 117–121 (GTGTG), Asp-140, Trp-168, and Asn-182. 182 to 185 (NPPY) contributes to the substrate binding site.

It belongs to the protein N5-glutamine methyltransferase family. PrmC subfamily.

It catalyses the reaction L-glutaminyl-[peptide chain release factor] + S-adenosyl-L-methionine = N(5)-methyl-L-glutaminyl-[peptide chain release factor] + S-adenosyl-L-homocysteine + H(+). Its function is as follows. Methylates the class 1 translation termination release factors RF1/PrfA and RF2/PrfB on the glutamine residue of the universally conserved GGQ motif. The polypeptide is Release factor glutamine methyltransferase (Yersinia pestis).